The primary structure comprises 119 residues: Succinate dehydrogenase assembly factor 2, mitochondrial (119 aa).

This sequence belongs to the SDHAF2 family. As to quaternary structure, interacts with the flavoprotein subunit within the SDH catalytic dimer.

Its subcellular location is the mitochondrion matrix. Functionally, plays an essential role in the assembly of succinate dehydrogenase (SDH), an enzyme complex (also referred to as respiratory complex II) that is a component of both the tricarboxylic acid (TCA) cycle and the mitochondrial electron transport chain, and which couples the oxidation of succinate to fumarate with the reduction of ubiquinone (coenzyme Q) to ubiquinol. Required for flavinylation (covalent attachment of FAD) of the flavoprotein subunit of the SDH catalytic dimer. The polypeptide is Succinate dehydrogenase assembly factor 2, mitochondrial (Caenorhabditis elegans).